The chain runs to 251 residues: Zinc import ATP-binding protein ZnuC (251 aa).

Positions V5–R220 constitute an ABC transporter domain. G37–S44 contacts ATP.

This sequence belongs to the ABC transporter superfamily. Zinc importer (TC 3.A.1.15.5) family. In terms of assembly, the complex is composed of two ATP-binding proteins (ZnuC), two transmembrane proteins (ZnuB) and a solute-binding protein (ZnuA).

Its subcellular location is the cell inner membrane. The catalysed reaction is Zn(2+)(out) + ATP(in) + H2O(in) = Zn(2+)(in) + ADP(in) + phosphate(in) + H(+)(in). Functionally, part of the ABC transporter complex ZnuABC involved in zinc import. Responsible for energy coupling to the transport system. The polypeptide is Zinc import ATP-binding protein ZnuC (Shigella dysenteriae serotype 1 (strain Sd197)).